A 922-amino-acid chain; its full sequence is MFEFSRSSSAEAERPEPFSQEGPALWSASLRSWDLCFEMDEQDRVIRVGGRQAYRLQCAHGLGEQPRPFAEYLERRAPGAPTLAGLRRGERLDLTLRSDAAAPLTCRFQPMQPLDGLGRSLLLGMDISDLNWQSDSQQHQLQSLSLGKLILSRLRHVSHGHLAEAVQEILESLSGAFQMQAIALLLGDGKGFCTVFASHVRPGSDSLLRPPLQLADDDLREGAGARLLRRGEGASTLLRQIGEDALYLVPATMRGGRLGALLVRPMSLEQLAQGPAPQDWQYLAELLANQVADRCELHEQHDSSRKLGLLQEMIGGGWWRYWAEQELFELAPALHDSLGLTGEYRRVPLEHLQGLLQPADADELGLRLRASLRSGQALAQDLCLRQPDSRGERRWLRIEGRPLGRGSALGLSGVLLDISEGRRQEERAQAAHARLRSLIDSAPVVIYVQRVEQGHLVPEFYSESASNLLGLDLQGQSWQALAERVHPDDLEAFFARGRELLREGRVKTRYRLADGQGNWHWLYDEAKLLRDAQGLPSEAVGLWLDVTEQHLAAQRIAESEERYRVLVEDSPALICRYTADLVLTYVNRTFADSLATSPERLVGRRLDEWLAAEDASALRARLLGSPREGASEVPELRFNLPGQRFLWLVWAERPLFDARGELCEVQAVGRDNTPVRRAQQQLAQGAKMASLGEMVSGLAHEVKQPLHVLRMTLFNMRQRMNSVGLDGDYLGEKLERMDAQVLRVDRLVSHLGVFSRKSALEALPFDPYAAFEGALGLLGEGLRQHAIEVECPAPTQRMVVRGQADQLEQVIINLLANARDALLGNPGLASRRVRLEQVACREPGWVELHVHDNGGGIEPLLLERIFEPFFTTKAEGKGTGLGLSVSHDLVRNMGGSLTAANQGEGALFVVRLPLAAPAEAGG.

Low complexity predominate over residues 1–10 (MFEFSRSSSA). The segment at 1–22 (MFEFSRSSSAEAERPEPFSQEG) is disordered. Residues 506–558 (VKTRYRLADGQGNWHWLYDEAKLLRDAQGLPSEAVGLWLDVTEQHLAAQRIAE) form the PAC 1 domain. Residues 559-622 (SEERYRVLVE…EDASALRARL (64 aa)) form the PAS domain. One can recognise a PAC 2 domain in the interval 632 to 684 (EVPELRFNLPGQRFLWLVWAERPLFDARGELCEVQAVGRDNTPVRRAQQQLAQ). The region spanning 697–916 (GLAHEVKQPL…LFVVRLPLAA (220 aa)) is the Histidine kinase domain. The residue at position 700 (His-700) is a Phosphohistidine; by autocatalysis.

Autophosphorylated.

It carries out the reaction ATP + protein L-histidine = ADP + protein N-phospho-L-histidine.. Member of the two-component regulatory system PprA/PprB involved in biofilm formation by controlling the expression of many related genes including type IVb pili major subunit flp pilin, adhesin bapA or cupE fimbriae. Functions as a heme sensor histidine kinase which is autophosphorylated at a histidine residue and transfers its phosphate group to PprB. The protein is Two-component sensor PprA of Pseudomonas aeruginosa (strain ATCC 15692 / DSM 22644 / CIP 104116 / JCM 14847 / LMG 12228 / 1C / PRS 101 / PAO1).